Here is a 162-residue protein sequence, read N- to C-terminus: General odorant-binding protein 2 (162 aa).

The signal sequence occupies residues 1 to 18; the sequence is MTSKSCLLLVAMVTLTTS. 3 cysteine pairs are disulfide-bonded: C40/C75, C71/C129, and C118/C138.

This sequence belongs to the PBP/GOBP family. As to expression, antenna.

Its function is as follows. Present in the aqueous fluid surrounding olfactory sensory dendrites and are thought to aid in the capture and transport of hydrophobic odorants into and through this fluid. This Heliothis virescens (Tobacco budworm moth) protein is General odorant-binding protein 2.